We begin with the raw amino-acid sequence, 698 residues long: Elongation factor G 1 (698 aa).

One can recognise a tr-type G domain in the interval 8-290 (ERYRNIGIVA…AVVDFLPAPI (283 aa)). GTP is bound by residues 17-24 (AHVDAGKT), 88-92 (DTPGH), and 142-145 (NKMD).

Belongs to the TRAFAC class translation factor GTPase superfamily. Classic translation factor GTPase family. EF-G/EF-2 subfamily.

Its subcellular location is the cytoplasm. Catalyzes the GTP-dependent ribosomal translocation step during translation elongation. During this step, the ribosome changes from the pre-translocational (PRE) to the post-translocational (POST) state as the newly formed A-site-bound peptidyl-tRNA and P-site-bound deacylated tRNA move to the P and E sites, respectively. Catalyzes the coordinated movement of the two tRNA molecules, the mRNA and conformational changes in the ribosome. The polypeptide is Elongation factor G 1 (Shewanella frigidimarina (strain NCIMB 400)).